The following is a 463-amino-acid chain: Gamma-aminobutyric acid receptor subunit alpha-5 (463 aa).

Residues 1–25 (MDNGMLSRFIMTQTLLVFCISMTLS) form the signal peptide. At 26–260 (SHFGFSQMPT…FHLKRKIGYF (235 aa)) the chain is on the extracellular side. A glycan (N-linked (GlcNAc...) asparagine) is linked at Asn45. 4-aminobutanoate is bound at residue Arg101. N-linked (GlcNAc...) asparagine glycosylation occurs at Asn145. Residue Thr164 participates in 4-aminobutanoate binding. Cys173 and Cys187 are joined by a disulfide. N-linked (GlcNAc...) asparagine glycosylation is found at Asn207 and Asn236. 3 helical membrane-spanning segments follow: residues 261–281 (VIQTYLPCIMTVILSQVSFWL), 287–308 (PARTVFGVTTVLTMTTLSISAR), and 319–340 (AMDWFIAVCYAFVFSALIEFAT). At 341–428 (VNYFTKRGWA…TYNSISKIDK (88 aa)) the chain is on the cytoplasmic side. A Glycyl lysine isopeptide (Lys-Gly) (interchain with G-Cter in ubiquitin) cross-link involves residue Lys355. Residues 387-408 (PNIPKEQPPAGTANAPTVSIKA) are disordered. Residues 429–449 (MSRIVFPILFGTFNLVYWATY) form a helical membrane-spanning segment.

It belongs to the ligand-gated ion channel (TC 1.A.9) family. Gamma-aminobutyric acid receptor (TC 1.A.9.5) subfamily. GABRA5 sub-subfamily. In terms of assembly, heteropentamer, formed by a combination of alpha (GABRA1-6), beta (GABRB1-3), gamma (GABRG1-3), delta (GABRD), epsilon (GABRE), rho (GABRR1-3), pi (GABRP) and theta (GABRQ) chains, each subunit exhibiting distinct physiological and pharmacological properties. In terms of tissue distribution, expressed in brain, in hippocampal pyramidal neurons.

The protein localises to the postsynaptic cell membrane. It is found in the cell membrane. It catalyses the reaction chloride(in) = chloride(out). In terms of biological role, alpha subunit of the heteropentameric ligand-gated chloride channel gated by gamma-aminobutyric acid (GABA), a major inhibitory neurotransmitter in the brain. GABA-gated chloride channels, also named GABA(A) receptors (GABAAR), consist of five subunits arranged around a central pore and contain GABA active binding site(s) located at the alpha and beta subunit interface(s). When activated by GABA, GABAARs selectively allow the flow of chloride anions across the cell membrane down their electrochemical gradient. GABAARs containing alpha-5/GABRA5 are mainly extrasynaptic and contribute to the tonic GABAergic inhibition of the hippocampus. Extrasynaptic alpha-5-containing GABAARs in CA1 pyramidal neurons play a role in learning and memory processes. This chain is Gamma-aminobutyric acid receptor subunit alpha-5, found in Mus musculus (Mouse).